The sequence spans 116 residues: Small ribosomal subunit protein uS13m (116 aa).

Belongs to the universal ribosomal protein uS13 family. As to quaternary structure, part of the small ribosomal subunit.

It localises to the mitochondrion. Its function is as follows. Located at the top of the head of the small subunit, it contacts several helices of the 18S rRNA. The protein is Small ribosomal subunit protein uS13m (RPS13) of Nicotiana tabacum (Common tobacco).